The sequence spans 417 residues: Phosphoglycerate kinase (417 aa).

The (2R)-3-phosphoglycerate site is built by Val-23, Asp-24, Phe-25, Asn-26, Gln-39, Arg-40, Ser-63, His-64, Gly-66, Arg-67, Leu-122, Arg-123, His-170, and Arg-171. Gly-214 contacts ADP. Gly-214 contributes to the CDP binding site. Positions 215 and 216 each coordinate AMP. An ATP-binding site is contributed by Ala-215. Position 215 (Ala-215) interacts with Mg(2+). A CDP-binding site is contributed by Asp-219. Asp-219 serves as a coordination point for Mg(2+). Residue Lys-220 coordinates AMP. Position 220 (Lys-220) interacts with ATP. Gly-238 contacts ADP. Gly-238 serves as a coordination point for CDP. AMP is bound by residues Gly-239 and Gly-313. ATP contacts are provided by Gly-239 and Gly-313. The CDP site is built by Gly-338, Ala-340, and Phe-343. Residue Phe-343 coordinates ADP. Glu-344 contacts AMP. ATP is bound by residues Glu-344, Asp-375, and Thr-376. A Mg(2+)-binding site is contributed by Asp-375.

It belongs to the phosphoglycerate kinase family. Monomer. The cofactor is Mg(2+).

Its subcellular location is the cytoplasm. It is found in the mitochondrion. The catalysed reaction is (2R)-3-phosphoglycerate + ATP = (2R)-3-phospho-glyceroyl phosphate + ADP. It participates in carbohydrate degradation; glycolysis; pyruvate from D-glyceraldehyde 3-phosphate: step 2/5. Functionally, catalyzes one of the two ATP producing reactions in the glycolytic pathway via the reversible conversion of 1,3-diphosphoglycerate to 3-phosphoglycerate. Both L- and D- forms of purine and pyrimidine nucleotides can be used as substrates, but the activity is much lower on pyrimidines. Negatively regulates the biosynthesis of acetyl-CoA from pyruvate in the mitochondrion. In Hypocrea rufa (Trichoderma viride), this protein is Phosphoglycerate kinase (pgk1).